The following is a 161-amino-acid chain: Decarboxylase (161 aa).

The region spanning 29–131 (QGMSEEAYRK…VGDHENFADT (103 aa)) is the EthD domain.

This sequence belongs to the tpcK family.

It carries out the reaction atrochrysone carboxylate + H(+) = atrochrysone + CO2. It participates in secondary metabolite biosynthesis. Functionally, decarboxylase; part of the gene cluster that mediates the biosynthesis of monodictyphenone, a prenyl xanthone derivative. The pathway begins with the synthesis of atrochrysone thioester by the polyketide synthase (PKS) mdpG. The atrochrysone carboxyl ACP thioesterase mdpF then breaks the thioester bond and releases the atrochrysone carboxylic acid from mdpG. The atrochrysone carboxylic acid is then converted to atrochrysone which is further transformed into emodin anthrone by mdpH-1 and mdpH-2. Emodin is further modified to yield monodictyphenone via several steps involving mdpB, mdpC mdpJ, mdpK and mdpL. These enzymes with xptA, xptB and xptC are also proposed to be involved in the synthesis of shamixanthone from emodin. Especially, direct reduction of emodin by the short chain dehydrogenase mdpC followed by dehydration catalyzed by the scytalone dehydratase-like protein mdpB gives loss of oxygen and formation of chrysophanol intermediate in two simple steps. The sequence is that of Decarboxylase from Emericella nidulans (strain FGSC A4 / ATCC 38163 / CBS 112.46 / NRRL 194 / M139) (Aspergillus nidulans).